The following is a 1342-amino-acid chain: DNA-directed RNA polymerase subunit beta (1342 aa).

This sequence belongs to the RNA polymerase beta chain family. As to quaternary structure, the RNAP catalytic core consists of 2 alpha, 1 beta, 1 beta' and 1 omega subunit. When a sigma factor is associated with the core the holoenzyme is formed, which can initiate transcription.

The enzyme catalyses RNA(n) + a ribonucleoside 5'-triphosphate = RNA(n+1) + diphosphate. Functionally, DNA-dependent RNA polymerase catalyzes the transcription of DNA into RNA using the four ribonucleoside triphosphates as substrates. This Salmonella agona (strain SL483) protein is DNA-directed RNA polymerase subunit beta.